A 124-amino-acid polypeptide reads, in one-letter code: Large-conductance mechanosensitive channel (124 aa).

The next 3 helical transmembrane spans lie at 14-34, 37-57, and 67-87; these read VIDL…VQSL, NLIN…NLVF, and GSFI…FLIV.

The protein belongs to the MscL family. Homopentamer.

It localises to the cell membrane. Channel that opens in response to stretch forces in the membrane lipid bilayer. May participate in the regulation of osmotic pressure changes within the cell. In Lactobacillus acidophilus (strain ATCC 700396 / NCK56 / N2 / NCFM), this protein is Large-conductance mechanosensitive channel.